The following is a 209-amino-acid chain: Transcription factor 23 (209 aa).

Disordered stretches follow at residues 1 to 20 and 54 to 85; these read MSQE…GHNK and LSRA…ARER. Basic and acidic residues predominate over residues 72 to 85; that stretch reads GRSEASPENAARER. The 53-residue stretch at 75–127 folds into the bHLH domain; that stretch reads EASPENAARERTRVKTLRQAFLALQAALPAVPPDTKLSKLDVLVLATSYIAHL.

As to quaternary structure, forms inactive heterodimeric complex with TCF3. Highly expressed in the uterus (predominantly in myometrium), ovary, and testis. Expression in the uterus is higher in the diestrus phase than in the estrus phase and reaches a maximum at 7.5 dpc. Expression declines towards the time of delivery and returns to the non-pregnant level 4 days after delivery. Low expression seen in lung, heart, intestine, and spleen.

The protein localises to the nucleus. In terms of biological role, inhibits E-box-mediated binding and transactivation of bHLH factors. Inhibitory effect is similar to that of ID proteins. Inhibits the formation of TCF3 and MYOD1 homodimers and heterodimers. Lacks DNA binding activity. May be involved in the regulation or modulation of smooth muscle contraction of the uterus during pregnancy and particularly around the time of delivery. Seems to play a role in the inhibition of myogenesis. The chain is Transcription factor 23 (Tcf23) from Mus musculus (Mouse).